The chain runs to 64 residues: Alpha-mammal toxin AnCra1 (64 aa).

Positions 2 to 64 (KDGYIVDDVN…VRTKGPGRCN (63 aa)) constitute an LCN-type CS-alpha/beta domain. Intrachain disulfides connect C12–C63, C16–C36, C22–C46, and C26–C48.

It belongs to the long (4 C-C) scorpion toxin superfamily. Sodium channel inhibitor family. Alpha subfamily. Expressed by the venom gland.

The protein resides in the secreted. Alpha toxins bind voltage-independently at site-3 of sodium channels (Nav) and inhibit the inactivation of the activated channels, thereby blocking neuronal transmission. This toxin is active against mammals. The recombinant toxin selectively inhibits the fast inactivation of hNav1.7/SCN9A channel (EC(50)=136.7 nM). Is potent in inhibiting the fast inactivation of hNav1.7 and has little effect on the steady-state inactivation. In vivo, intravenous injection into mice induces muscle contraction, leading to severe paralysis and death. The protein is Alpha-mammal toxin AnCra1 of Androctonus crassicauda (Arabian fat-tailed scorpion).